Consider the following 178-residue polypeptide: Large ribosomal subunit protein uL30 (178 aa).

The protein belongs to the universal ribosomal protein uL30 family. As to quaternary structure, part of the 50S ribosomal subunit.

The chain is Large ribosomal subunit protein uL30 from Pyrobaculum aerophilum (strain ATCC 51768 / DSM 7523 / JCM 9630 / CIP 104966 / NBRC 100827 / IM2).